The sequence spans 120 residues: U13-lycotoxin-Ls1a (120 aa).

The N-terminal stretch at 1–16 (MKILFVLISILYAVYC) is a signal peptide. The propeptide occupies 17–54 (FSSEEDVDSAYLANELEPVEDINSEQYAALEPKEEQER). Disulfide bonds link cysteine 56-cysteine 70, cysteine 63-cysteine 76, cysteine 69-cysteine 87, and cysteine 78-cysteine 85. In terms of domain architecture, Agouti spans 56–95 (CADMGQDCKDDCDCCLNIATCNCWFGRYFCSCTFGDYQTC).

The protein belongs to the neurotoxin 05 (agouti) family. Post-translationally, contains 6 disulfide bonds. In terms of tissue distribution, expressed by the venom gland.

The protein resides in the secreted. This chain is U13-lycotoxin-Ls1a, found in Lycosa singoriensis (Wolf spider).